The chain runs to 449 residues: UDP-N-acetylmuramate--L-alanine ligase (449 aa).

121-127 (GAHGKSS) provides a ligand contact to ATP.

This sequence belongs to the MurCDEF family.

It localises to the cytoplasm. It carries out the reaction UDP-N-acetyl-alpha-D-muramate + L-alanine + ATP = UDP-N-acetyl-alpha-D-muramoyl-L-alanine + ADP + phosphate + H(+). It participates in cell wall biogenesis; peptidoglycan biosynthesis. Functionally, cell wall formation. The chain is UDP-N-acetylmuramate--L-alanine ligase from Helicobacter pylori (strain P12).